A 353-amino-acid chain; its full sequence is tRNA N6-adenosine threonylcarbamoyltransferase (353 aa).

Fe cation contacts are provided by His-109 and His-113. Substrate contacts are provided by residues 136–140 (TVSGG), Asp-169, Gly-182, Asp-186, and Asn-284. Position 312 (Asp-312) interacts with Fe cation.

The protein belongs to the KAE1 / TsaD family. Fe(2+) serves as cofactor.

It localises to the cytoplasm. The catalysed reaction is L-threonylcarbamoyladenylate + adenosine(37) in tRNA = N(6)-L-threonylcarbamoyladenosine(37) in tRNA + AMP + H(+). Its function is as follows. Required for the formation of a threonylcarbamoyl group on adenosine at position 37 (t(6)A37) in tRNAs that read codons beginning with adenine. Is involved in the transfer of the threonylcarbamoyl moiety of threonylcarbamoyl-AMP (TC-AMP) to the N6 group of A37, together with TsaE and TsaB. TsaD likely plays a direct catalytic role in this reaction. The sequence is that of tRNA N6-adenosine threonylcarbamoyltransferase from Chlorobaculum tepidum (strain ATCC 49652 / DSM 12025 / NBRC 103806 / TLS) (Chlorobium tepidum).